Reading from the N-terminus, the 310-residue chain is MPLRLVFMGTPEFAVPTLLALAAHGHDIAAVYTREPKPAGRGMKLQETPVALAAHRLQAPVLTPKTLRTDEALANFRAHEADAAVVVAYGMILPQAILDAPELGCYNLHGSLLPRWRGAAPLNRAIMAGDAETGVMVMKMDAGLDTGDVAMAERIAITDAMTVTDVHDQLARLGADLMVRAMAALERGGLQLTKQSEDGVTYAAKIDKAEAKIDFAKPAWAVLRHIHGLSPFPGAWCELPIEGQPVRIKVLRCAIADGRGEPGEVIDDHLTIACGDGAIRVSQLQRAGKQPMTAEEFLRGTPIAKGVRVG.

Ser-111–Pro-114 contacts (6S)-5,6,7,8-tetrahydrofolate.

The protein belongs to the Fmt family.

It catalyses the reaction L-methionyl-tRNA(fMet) + (6R)-10-formyltetrahydrofolate = N-formyl-L-methionyl-tRNA(fMet) + (6S)-5,6,7,8-tetrahydrofolate + H(+). In terms of biological role, attaches a formyl group to the free amino group of methionyl-tRNA(fMet). The formyl group appears to play a dual role in the initiator identity of N-formylmethionyl-tRNA by promoting its recognition by IF2 and preventing the misappropriation of this tRNA by the elongation apparatus. In Rhodopseudomonas palustris (strain TIE-1), this protein is Methionyl-tRNA formyltransferase.